Reading from the N-terminus, the 418-residue chain is Synaptotagmin-15 (418 aa).

The Extracellular portion of the chain corresponds to 1–4; the sequence is MAEQ. A helical; Signal-anchor for type III membrane protein membrane pass occupies residues 5-27; it reads LAFLIGGIIGGLLLLIGVSCCLW. Topologically, residues 28 to 418 are cytoplasmic; sequence RRFCATFTYE…WHALCRPTEP (391 aa). C2 domains follow at residues 144 to 261 and 275 to 396; these read CLGR…HRII and EFGD…EHWG.

Belongs to the synaptotagmin family. As to quaternary structure, homodimer. As to expression, isoform 1 and isoform 2 are expressed in heart, lung, skeletal muscle and testis; not detected in brain, liver and kidney. Isoform 1 is expressed in spleen.

Its subcellular location is the membrane. May be involved in the trafficking and exocytosis of secretory vesicles in non-neuronal tissues. This Mus musculus (Mouse) protein is Synaptotagmin-15 (Syt15).